The following is a 339-amino-acid chain: DNA-directed RNA polymerase subunit alpha (339 aa).

Residues 1–235 (MTIQKNWQEL…DQLNVFVNFE (235 aa)) are alpha N-terminal domain (alpha-NTD). The alpha C-terminal domain (alpha-CTD) stretch occupies residues 251–339 (FNPAFLKKVD…ELAKRFEDHY (89 aa)).

Belongs to the RNA polymerase alpha chain family. As to quaternary structure, homodimer. The RNAP catalytic core consists of 2 alpha, 1 beta, 1 beta' and 1 omega subunit. When a sigma factor is associated with the core the holoenzyme is formed, which can initiate transcription.

The catalysed reaction is RNA(n) + a ribonucleoside 5'-triphosphate = RNA(n+1) + diphosphate. In terms of biological role, DNA-dependent RNA polymerase catalyzes the transcription of DNA into RNA using the four ribonucleoside triphosphates as substrates. The sequence is that of DNA-directed RNA polymerase subunit alpha from Rhodopseudomonas palustris (strain BisA53).